Here is a 487-residue protein sequence, read N- to C-terminus: Cysteine--tRNA ligase (487 aa).

Zn(2+) is bound at residue cysteine 29. A 'HIGH' region motif is present at residues 31 to 41; the sequence is VTVYDFCHIGH. Positions 209, 234, and 238 each coordinate Zn(2+). The short motif at 266 to 270 is the 'KMSKS' region element; the sequence is KMSKS. Lysine 269 serves as a coordination point for ATP.

It belongs to the class-I aminoacyl-tRNA synthetase family. Monomer. The cofactor is Zn(2+).

The protein resides in the cytoplasm. It carries out the reaction tRNA(Cys) + L-cysteine + ATP = L-cysteinyl-tRNA(Cys) + AMP + diphosphate. This is Cysteine--tRNA ligase from Trichlorobacter lovleyi (strain ATCC BAA-1151 / DSM 17278 / SZ) (Geobacter lovleyi).